Consider the following 65-residue polypeptide: Large ribosomal subunit protein uL29 (65 aa).

This sequence belongs to the universal ribosomal protein uL29 family.

The polypeptide is Large ribosomal subunit protein uL29 (rpmC) (Buchnera aphidicola subsp. Acyrthosiphon pisum (strain APS) (Acyrthosiphon pisum symbiotic bacterium)).